The chain runs to 49 residues: Large ribosomal subunit protein eL40 (49 aa).

It belongs to the eukaryotic ribosomal protein eL40 family.

This Archaeoglobus fulgidus (strain ATCC 49558 / DSM 4304 / JCM 9628 / NBRC 100126 / VC-16) protein is Large ribosomal subunit protein eL40.